The chain runs to 375 residues: DNA replication and repair protein RecF (375 aa).

Gly-30 to Thr-37 contributes to the ATP binding site.

It belongs to the RecF family.

It localises to the cytoplasm. Its function is as follows. The RecF protein is involved in DNA metabolism; it is required for DNA replication and normal SOS inducibility. RecF binds preferentially to single-stranded, linear DNA. It also seems to bind ATP. This chain is DNA replication and repair protein RecF, found in Bacillus mycoides (strain KBAB4) (Bacillus weihenstephanensis).